We begin with the raw amino-acid sequence, 143 residues long: Nucleoside diphosphate kinase (143 aa).

6 residues coordinate ATP: K11, F59, R87, T93, R104, and N114. H117 functions as the Pros-phosphohistidine intermediate in the catalytic mechanism.

This sequence belongs to the NDK family. Homotetramer. Mg(2+) serves as cofactor.

The protein resides in the cytoplasm. It carries out the reaction a 2'-deoxyribonucleoside 5'-diphosphate + ATP = a 2'-deoxyribonucleoside 5'-triphosphate + ADP. It catalyses the reaction a ribonucleoside 5'-diphosphate + ATP = a ribonucleoside 5'-triphosphate + ADP. Major role in the synthesis of nucleoside triphosphates other than ATP. The ATP gamma phosphate is transferred to the NDP beta phosphate via a ping-pong mechanism, using a phosphorylated active-site intermediate. The protein is Nucleoside diphosphate kinase of Tolumonas auensis (strain DSM 9187 / NBRC 110442 / TA 4).